The primary structure comprises 98 residues: NADH-ubiquinone oxidoreductase chain 4L (98 aa).

3 consecutive transmembrane segments (helical) span residues 1-21 (MTMV…GLLM), 29-49 (SLLC…VTIL), and 61-81 (IILL…LVMV).

The protein belongs to the complex I subunit 4L family. As to quaternary structure, core subunit of respiratory chain NADH dehydrogenase (Complex I) which is composed of 45 different subunits.

The protein resides in the mitochondrion inner membrane. It carries out the reaction a ubiquinone + NADH + 5 H(+)(in) = a ubiquinol + NAD(+) + 4 H(+)(out). Core subunit of the mitochondrial membrane respiratory chain NADH dehydrogenase (Complex I) which catalyzes electron transfer from NADH through the respiratory chain, using ubiquinone as an electron acceptor. Part of the enzyme membrane arm which is embedded in the lipid bilayer and involved in proton translocation. This is NADH-ubiquinone oxidoreductase chain 4L (MT-ND4L) from Leptonychotes weddellii (Weddell seal).